The chain runs to 438 residues: Xylose isomerase (438 aa).

Residues His103 and Asp106 contribute to the active site. Mg(2+) contacts are provided by Glu234, Glu270, His273, Asp298, Asp309, Asp311, and Asp341.

This sequence belongs to the xylose isomerase family. In terms of assembly, homotetramer. Mg(2+) is required as a cofactor.

It localises to the cytoplasm. The enzyme catalyses alpha-D-xylose = alpha-D-xylulofuranose. This is Xylose isomerase from Phocaeicola vulgatus (strain ATCC 8482 / DSM 1447 / JCM 5826 / CCUG 4940 / NBRC 14291 / NCTC 11154) (Bacteroides vulgatus).